Reading from the N-terminus, the 545-residue chain is ATP synthase subunit alpha (545 aa).

172-179 (GDRKTGKT) contributes to the ATP binding site.

The protein belongs to the ATPase alpha/beta chains family. F-type ATPases have 2 components, CF(1) - the catalytic core - and CF(0) - the membrane proton channel. CF(1) has five subunits: alpha(3), beta(3), gamma(1), delta(1), epsilon(1). CF(0) has three main subunits: a(1), b(2) and c(9-12). The alpha and beta chains form an alternating ring which encloses part of the gamma chain. CF(1) is attached to CF(0) by a central stalk formed by the gamma and epsilon chains, while a peripheral stalk is formed by the delta and b chains.

The protein resides in the cell membrane. It carries out the reaction ATP + H2O + 4 H(+)(in) = ADP + phosphate + 5 H(+)(out). Produces ATP from ADP in the presence of a proton gradient across the membrane. The alpha chain is a regulatory subunit. The chain is ATP synthase subunit alpha from Corynebacterium urealyticum (strain ATCC 43042 / DSM 7109).